Consider the following 491-residue polypeptide: MATFKDACYHYKKLNKLNSLVLKLGANDEWRPAPVTKYKGWCLDCCQYTNLTYCRGCALYHVCQWCSQYNRCFLDEEPHLLRMRTFKDVITKEDIEGLLTMYEILFPINEKLVNKFINSVKQRKCRTEYLLEWYNHLLMPITLQALTIKLEDSTYYIFGYYDCMEHENQTPFQFINLLEKYDKLLLDDRNFNRMLHLPTILQQEYALRYFSKSRFLSKGKKRLNRNDFSDNLVEDRHSPTSLIQVVRNCISTHPNDYEWNKACTFVVDARNYINIMNSSYTEHYSVSQRCKLFTKYKFGIISKLVKPNYIFSSHESCALNVHNCRWCQINSHYKVWEDFRLKKIYNNVMDFIRALVKSNGNVGQCSSQESVYKCIPDIFLICKMEKWNEAVEVLFNYLEPVDINGTEYVLLDYEVNWEVRGLVMQSMDGKVPRILNINDTKKILSTIIFDWFDVRYMRETPMTTSTTNQLRTLNKRNELIDEYDLELSDVE.

The RNA-binding stretch occupies residues 1–81; sequence MATFKDACYH…CFLDEEPHLL (81 aa). Positions 42–79 are zinc-binding domain; that stretch reads CLDCCQYTNLTYCRGCALYHVCQWCSQYNRCFLDEEPH. Positions 82 to 176 are important for cytoskeleton localization; sequence RMRTFKDVIT…ENQTPFQFIN (95 aa). The interaction with host IRF3 stretch occupies residues 320–491; sequence NVHNCRWCQI…EYDLELSDVE (172 aa). A pLxIS motif motif is present at residues 485–488; sequence LELS.

The protein belongs to the rotavirus NSP1 family. Interacts (via C-terminus) with host IRF3; this interaction leads to IRF3 degradation. Interacts with host IRF7; this interaction leads to IRF7 degradation. Interacts with host CUL1 and CUL3.

It localises to the host cytoplasm. The protein resides in the host cytoskeleton. Functionally, plays a role in the inhibition of host innate immunity by inducing the degradation of key host factors required to activate interferon production such as IRF3, IRF5 or IRF7. Associates with components of cullin RING ligases (CRLs) including CUL1 or CUL3, which are essential multisubunit ubiquitination complexes, to modulate their activities. This Bos taurus (Bovine) protein is Non-structural protein 1.